A 261-amino-acid polypeptide reads, in one-letter code: Indole-3-glycerol phosphate synthase (261 aa).

This sequence belongs to the TrpC family.

The enzyme catalyses 1-(2-carboxyphenylamino)-1-deoxy-D-ribulose 5-phosphate + H(+) = (1S,2R)-1-C-(indol-3-yl)glycerol 3-phosphate + CO2 + H2O. Its pathway is amino-acid biosynthesis; L-tryptophan biosynthesis; L-tryptophan from chorismate: step 4/5. The sequence is that of Indole-3-glycerol phosphate synthase from Burkholderia pseudomallei (strain 1710b).